We begin with the raw amino-acid sequence, 230 residues long: Cytidylate kinase (230 aa).

13–21 contacts ATP; the sequence is GPAGTGKSS.

The protein belongs to the cytidylate kinase family. Type 1 subfamily.

Its subcellular location is the cytoplasm. It carries out the reaction CMP + ATP = CDP + ADP. The catalysed reaction is dCMP + ATP = dCDP + ADP. This Mycobacterium tuberculosis (strain ATCC 25177 / H37Ra) protein is Cytidylate kinase.